The chain runs to 200 residues: MLLLASASPARRRLLEQAQIPHQVMVSGVDEDQIHHPDPAQLVQLLAEAKASAVKLKVEQSAELNVSIKAVLGCDSVLAFEGEVFGKPVDAAEAVARWQRMRGKWAELHTGHCLIPPSFAPTTEGRAPEMQCTCVTTRVLFANLTDVEVEDYVASGEPLQCAGGFALEGRGGCCVEQLAGCYSNVIGLSLPLLRRWLSLS.

The active-site Proton acceptor is D75.

Belongs to the Maf family. It depends on a divalent metal cation as a cofactor.

The protein resides in the cytoplasm. The catalysed reaction is a ribonucleoside 5'-triphosphate + H2O = a ribonucleoside 5'-phosphate + diphosphate + H(+). The enzyme catalyses a 2'-deoxyribonucleoside 5'-triphosphate + H2O = a 2'-deoxyribonucleoside 5'-phosphate + diphosphate + H(+). Nucleoside triphosphate pyrophosphatase. May have a dual role in cell division arrest and in preventing the incorporation of modified nucleotides into cellular nucleic acids. The protein is Nucleoside triphosphate pyrophosphatase of Synechococcus sp. (strain CC9311).